A 300-amino-acid chain; its full sequence is Homoserine kinase (300 aa).

82-92 (RPGSGLGSSAA) provides a ligand contact to ATP.

Belongs to the GHMP kinase family. Homoserine kinase subfamily.

It is found in the cytoplasm. It catalyses the reaction L-homoserine + ATP = O-phospho-L-homoserine + ADP + H(+). The protein operates within amino-acid biosynthesis; L-threonine biosynthesis; L-threonine from L-aspartate: step 4/5. Its function is as follows. Catalyzes the ATP-dependent phosphorylation of L-homoserine to L-homoserine phosphate. This chain is Homoserine kinase, found in Methanocella arvoryzae (strain DSM 22066 / NBRC 105507 / MRE50).